A 103-amino-acid polypeptide reads, in one-letter code: Integration host factor subunit beta (103 aa).

Belongs to the bacterial histone-like protein family. Heterodimer of an alpha and a beta chain.

In terms of biological role, this protein is one of the two subunits of integration host factor, a specific DNA-binding protein that functions in genetic recombination as well as in transcriptional and translational control. In Bradyrhizobium sp. (strain BTAi1 / ATCC BAA-1182), this protein is Integration host factor subunit beta.